Consider the following 161-residue polypeptide: Type II secretion system protein M (161 aa).

The Cytoplasmic segment spans residues 1–16 (MHNLLALWQQRTRRER). Residues 17-36 (CLLLGMAVVLLIGLVYYTLW) form a helical membrane-spanning segment. Topologically, residues 37 to 161 (QPWQNREAQW…TLVLERSDEK (125 aa)) are periplasmic.

Belongs to the GSP M family. In terms of assembly, type II secretion system is composed of four main components: the outer membrane complex, the inner membrane complex, the cytoplasmic secretion ATPase and the periplasm-spanning pseudopilus. Forms homodimers. Interacts with PulL/GspL. Interacts with PulE/GspE and PulF/GspF.

Its subcellular location is the cell inner membrane. Functionally, inner membrane component of the type II secretion system required for the energy-dependent secretion of extracellular factors such as proteases and toxins from the periplasm. Plays a role in the complex assembly and recruits PulL resulting in a stable complex in the inner membrane. Provides thus a link between the energy-providing PulE protein in the cytoplasm and the rest of the T2SS machinery. This chain is Type II secretion system protein M (pulM), found in Klebsiella pneumoniae.